We begin with the raw amino-acid sequence, 115 residues long: Large ribosomal subunit protein bL19 (115 aa).

Belongs to the bacterial ribosomal protein bL19 family.

This protein is located at the 30S-50S ribosomal subunit interface and may play a role in the structure and function of the aminoacyl-tRNA binding site. The sequence is that of Large ribosomal subunit protein bL19 from Alkaliphilus oremlandii (strain OhILAs) (Clostridium oremlandii (strain OhILAs)).